Here is a 278-residue protein sequence, read N- to C-terminus: MKEIYRLVDVSYKYPNGSIALDNVNLNIYKNEVVAILGPNGAGKTTLLKILDGLVFPDKGEVYFEGKKLTDEILRDKELMKEFRRKVGFVFQNPDVMLFNPTVWDEVAFSPLHLYSKEKAIEVTDKTLKDMKIYHLKDRHPYNLSGGEKKKVSISCILSVEPEVILMDEPTSALDPKSRAEIMNLIKSFKECGKTVVLVTHDLNLACLADRCYVLNKKVIFEGKVKDLFSLNLDELNLDVPEISKLFIKLKNMGYNINEIPVTLDEAVNIISKLFQKY.

Residues 5 to 242 (YRLVDVSYKY…LDELNLDVPE (238 aa)) form the ABC transporter domain. An ATP-binding site is contributed by 38-45 (GPNGAGKT).

This sequence belongs to the ABC transporter superfamily.

It localises to the cell membrane. In terms of biological role, probably part of an ABC transporter complex. Responsible for energy coupling to the transport system. The protein is Putative ABC transporter ATP-binding protein MJ1572 of Methanocaldococcus jannaschii (strain ATCC 43067 / DSM 2661 / JAL-1 / JCM 10045 / NBRC 100440) (Methanococcus jannaschii).